A 485-amino-acid chain; its full sequence is MHFTSSLLATLIWFTLPVQSLNTESRTTSNNTISILTNHFQILKDLLPYSKTSKPQIKESRPLIKVSRDGVPINFHRAPAIIMKSNKTDDLVRNSNKTMVLTEIKTITEFATTTVSPTQEFQALQINLNTLSIETSTPTFQSHDFPPITIEDTPKTLEPEESSDALQRDAFDQIKKLEKLVLDLRLEMKEQQKSFNDQLVDIYTARSIVPIYTTHIVTSAIPSYVPKEEVMVSHDSAPIVSRPRTDIPVSQRIDTISKHKMNGKNILNNNPPPNSVLIVPQFQFHERMATKTEVAYMKPKIVWTNFPTTTATSMFDNFILKNLVDETDSEIDSGETELSDDYYYYYSYEDDGKEDDSDEITAQILLSNSELGTKTPNFEDPFEQINIEDNKVISVNTPKTKKPTTTVFGTSTSALSTFESTIFEIPKFFYGSRRKQPSSFKNKNSTIKFDVFDWIFESGTTNEKVHGLVLVSSGVLLGTCLLFIL.

The signal sequence occupies residues 1-20 (MHFTSSLLATLIWFTLPVQS). Residues Asn30, Asn86, Asn96, and Asn444 are each glycosylated (N-linked (GlcNAc...) asparagine). Gly467 carries GPI-anchor amidated glycine lipidation. Residues 468–485 (LVLVSSGVLLGTCLLFIL) constitute a propeptide, removed in mature form.

It is found in the cell membrane. In Candida albicans (strain SC5314 / ATCC MYA-2876) (Yeast), this protein is Predicted GPI-anchored protein 27 (PGA27).